Reading from the N-terminus, the 596-residue chain is MAANSTSDLHTPGTQLSVADIIVITVYFALNVAVGIWSSCRASRNTVNGYFLAGRDMTWWPIGASLFASSEGSGLFIGLAGSGAAGGLAVAGFEWNATYVLLALAWVFVPIYISSEIVTLPEYIQKRYGGQRIRMYLSVLSLLLSVFTKISLDLYAGALFVHICLGWNFYLSTILTLGITALYTIAGGLAAVIYTDALQTLIMVVGAVILTIKAFDQIGGYGQLEAAYAQAIPSRTIANTTCHLPRTDAMHMFRDPHTGDLPWTGMTFGLTIMATWYWCTDQVIVQRSLSARDLNHAKAGSILASYLKMLPMGLIIMPGMISRALFPDDVGCVVPSECLRACGAEVGCSNIAYPKLVMELMPIGLRGLMIAVMLAALMSSLTSIFNSSSTLFTMDIWRRLRPRSGERELLLVGRLVIVALIGVSVAWIPVLQDSNSGQLFIYMQSVTSSLAPPVTAVFVLGVFWRRANEQGAFWGLIAGLVVGATRLVLEFLNPAPPCGEPDTRPAVLGSIHYLHFAVALFALSGAVVVAGSLLTPPPQSVQIENLTWWTLAQDVPLGTKAGDGQTPQKHAFWARVCGFNAILLMCVNIFFYAYFA.

The Extracellular portion of the chain corresponds to 1-15; it reads MAANSTSDLHTPGTQ. N4 carries N-linked (GlcNAc...) asparagine glycosylation. The chain crosses the membrane as a helical span at residues 16–36; the sequence is LSVADIIVITVYFALNVAVGI. The Cytoplasmic portion of the chain corresponds to 37–72; the sequence is WSSCRASRNTVNGYFLAGRDMTWWPIGASLFASSEG. The chain crosses the membrane as a helical span at residues 73–93; it reads SGLFIGLAGSGAAGGLAVAGF. The Extracellular segment spans residues 94–99; the sequence is EWNATY. A glycan (N-linked (GlcNAc...) asparagine) is linked at N96. The helical transmembrane segment at 100 to 120 threads the bilayer; the sequence is VLLALAWVFVPIYISSEIVTL. Topologically, residues 121–149 are cytoplasmic; that stretch reads PEYIQKRYGGQRIRMYLSVLSLLLSVFTK. S141 and S145 each carry phosphoserine. Residue T148 is modified to Phosphothreonine. Residues 150–170 form a helical membrane-spanning segment; that stretch reads ISLDLYAGALFVHICLGWNFY. Topologically, residues 171–173 are extracellular; the sequence is LST. A helical membrane pass occupies residues 174 to 194; it reads ILTLGITALYTIAGGLAAVIY. The Cytoplasmic segment spans residues 195–200; sequence TDALQT. The chain crosses the membrane as a helical span at residues 201 to 221; it reads LIMVVGAVILTIKAFDQIGGY. The Extracellular segment spans residues 222-264; sequence GQLEAAYAQAIPSRTIANTTCHLPRTDAMHMFRDPHTGDLPWT. Residues 265-285 traverse the membrane as a helical segment; it reads GMTFGLTIMATWYWCTDQVIV. Residues 286–300 lie on the Cytoplasmic side of the membrane; the sequence is QRSLSARDLNHAKAG. Residues 301-321 traverse the membrane as a helical segment; the sequence is SILASYLKMLPMGLIIMPGMI. Over 322-355 the chain is Extracellular; sequence SRALFPDDVGCVVPSECLRACGAEVGCSNIAYPK. The chain crosses the membrane as a helical span at residues 356-376; that stretch reads LVMELMPIGLRGLMIAVMLAA. The Cytoplasmic portion of the chain corresponds to 377 to 409; sequence LMSSLTSIFNSSSTLFTMDIWRRLRPRSGEREL. Residues 410–430 traverse the membrane as a helical segment; it reads LLVGRLVIVALIGVSVAWIPV. The Extracellular portion of the chain corresponds to 431 to 443; it reads LQDSNSGQLFIYM. The helical transmembrane segment at 444–464 threads the bilayer; sequence QSVTSSLAPPVTAVFVLGVFW. Topologically, residues 465-471 are cytoplasmic; the sequence is RRANEQG. A helical membrane pass occupies residues 472–492; that stretch reads AFWGLIAGLVVGATRLVLEFL. At 493-513 the chain is on the extracellular side; sequence NPAPPCGEPDTRPAVLGSIHY. Residues 514 to 534 form a helical membrane-spanning segment; sequence LHFAVALFALSGAVVVAGSLL. At 535–575 the chain is on the cytoplasmic side; sequence TPPPQSVQIENLTWWTLAQDVPLGTKAGDGQTPQKHAFWAR. Residues 576–596 form a helical membrane-spanning segment; the sequence is VCGFNAILLMCVNIFFYAYFA.

The protein belongs to the sodium:solute symporter (SSF) (TC 2.A.21) family. As to expression, predominantly expressed at high levels in kidney. Very low expression is detected in testes. In terms of tissue distribution, expressed in kidney. The most abundant isoform expressed in kidney.

The protein localises to the apical cell membrane. The enzyme catalyses D-mannose(out) + Na(+)(out) = D-mannose(in) + Na(+)(in). It catalyses the reaction D-fructopyranose(out) + Na(+)(out) = D-fructopyranose(in) + Na(+)(in). Inhibited by phlorizin. Its function is as follows. Electrogenic Na+-coupled sugar symporter that actively transports D-mannose or D-fructose at the plasma membrane, with a Na+ to sugar coupling ratio of 1:1. Transporter activity is driven by a transmembrane Na+ electrochemical gradient set by the Na+/K+ pump. Exclusively recognizes sugar substrates having a pyranose ring with an axial hydroxyl group on carbon 2. Has likely evolved to enable renal reabsorption of D-mannose, an important constituent of oligosaccharide chains of glycoproteins. Contributes to dietary D-fructose reabsorption from glomerular filtrate across the brush border of the kidney. In terms of biological role, appears to have no transporter activity. The protein is Sodium/mannose cotransporter SLC5A10 (SLC5A10) of Homo sapiens (Human).